The primary structure comprises 235 residues: Ribosomal RNA small subunit methyltransferase G (235 aa).

S-adenosyl-L-methionine-binding positions include Gly-98, Met-103, 149 to 150 (VE), and Arg-164.

Belongs to the methyltransferase superfamily. RNA methyltransferase RsmG family.

The protein localises to the cytoplasm. It carries out the reaction guanosine(527) in 16S rRNA + S-adenosyl-L-methionine = N(7)-methylguanosine(527) in 16S rRNA + S-adenosyl-L-homocysteine. Specifically methylates the N7 position of guanine in position 527 of 16S rRNA. This Cupriavidus metallidurans (strain ATCC 43123 / DSM 2839 / NBRC 102507 / CH34) (Ralstonia metallidurans) protein is Ribosomal RNA small subunit methyltransferase G.